The sequence spans 193 residues: Adenylate kinase (193 aa).

Residue 11-16 participates in ATP binding; it reads GAGKGT. Residues 31–60 form an NMP region; it reads STGDLLRAEVKAQTPLGCQAKVYMDAGELV. AMP-binding positions include threonine 32, arginine 37, 58–60, 85–88, and glutamine 92; these read ELV and GFPR. An LID region spans residues 126–136; the sequence is ARGKEQGRSDD. Arginine 127 contacts ATP. Positions 133 and 145 each coordinate AMP. ATP is bound at residue glutamine 173.

This sequence belongs to the adenylate kinase family. In terms of assembly, monomer.

Its subcellular location is the cytoplasm. It catalyses the reaction AMP + ATP = 2 ADP. The protein operates within purine metabolism; AMP biosynthesis via salvage pathway; AMP from ADP: step 1/1. Its function is as follows. Catalyzes the reversible transfer of the terminal phosphate group between ATP and AMP. Plays an important role in cellular energy homeostasis and in adenine nucleotide metabolism. The polypeptide is Adenylate kinase (Synechococcus sp. (strain JA-2-3B'a(2-13)) (Cyanobacteria bacterium Yellowstone B-Prime)).